Reading from the N-terminus, the 461-residue chain is Argininosuccinate lyase (461 aa).

The protein belongs to the lyase 1 family. Argininosuccinate lyase subfamily. In terms of assembly, homotetramer.

It localises to the cytoplasm. It carries out the reaction 2-(N(omega)-L-arginino)succinate = fumarate + L-arginine. It participates in amino-acid biosynthesis; L-arginine biosynthesis; L-arginine from L-ornithine and carbamoyl phosphate: step 3/3. The protein is Argininosuccinate lyase of Nostoc punctiforme (strain ATCC 29133 / PCC 73102).